The chain runs to 77 residues: Conotoxin Cl6.15 (77 aa).

The signal sequence occupies residues 1–19 (MKLSVKFLLFLMILPLIAG). Residues 20–37 (EDMSDNDAPKSVDVQRNV) constitute a propeptide that is removed on maturation. 3 disulfide bridges follow: C49-C61, C55-C66, and C60-C75.

It belongs to the conotoxin I1 superfamily. Expressed by the venom duct.

The protein localises to the secreted. This Californiconus californicus (California cone) protein is Conotoxin Cl6.15.